A 367-amino-acid chain; its full sequence is Alginate lyase (367 aa).

A signal peptide spans 1–24 (MTLLKRISSPALLALALFGGAAHA). Residues 63–64 (SK), 136–137 (HT), and Y254 contribute to the substrate site.

The protein belongs to the polysaccharide lyase 5 family.

It is found in the periplasm. It catalyses the reaction Eliminative cleavage of alginate to give oligosaccharides with 4-deoxy-alpha-L-erythro-hex-4-enuronosyl groups at their non-reducing ends and beta-D-mannuronate at their reducing end.. In terms of biological role, catalyzes the depolymerization of alginate by cleaving the beta-1,4 glycosidic bond between two adjacent sugar residues via a beta-elimination mechanism. May serve to degrade mislocalized alginate that is trapped in the periplasmic space. This Pseudomonas putida (strain GB-1) protein is Alginate lyase.